We begin with the raw amino-acid sequence, 515 residues long: Synaptic vesicular amine transporter (515 aa).

Topologically, residues 1 to 20 (MALSDLVLLRWLRDSRHSRK) are cytoplasmic. A helical membrane pass occupies residues 21-41 (LILFIVFLALLLDNMLLTVVV). At 42–130 (PIIPSYLYSI…EDRDLLNENV (89 aa)) the chain is on the lumenal, vesicle side. Residues asparagine 56, asparagine 80, asparagine 81, asparagine 89, and asparagine 111 are each glycosylated (N-linked (GlcNAc...) asparagine). Residues cysteine 118 and cysteine 325 are joined by a disulfide bond. The helical transmembrane segment at 131 to 151 (QVGLLFASKATVQLLTNPFIG) threads the bilayer. Topologically, residues 152 to 160 (LLTNRIGYP) are cytoplasmic. The chain crosses the membrane as a helical span at residues 161 to 181 (IPMFAGFCIMFISTVMFAFSS). Over 182 to 190 (SYAFLLIAR) the chain is Lumenal, vesicle. A helical transmembrane segment spans residues 191–211 (SLQGIGSSCSSVAGMGMLASV). Topologically, residues 212–220 (YTDDEERGK) are cytoplasmic. Residues 221-243 (PMGIALGGLAMGVLVGPPFGSVL) form a helical membrane-spanning segment. The serotonin site is built by leucine 229 and valine 233. At 244–249 (YEFVGK) the chain is on the lumenal, vesicle side. Residues 250 to 272 (TAPFLVLAALVLLDGAIQLFVLQ) traverse the membrane as a helical segment. The Cytoplasmic portion of the chain corresponds to 273–292 (PSRVQPESQKGTPLTTLLKD). A helical membrane pass occupies residues 293–312 (PYILIAAGSICFANMGIAML). Asparagine 306, isoleucine 309, glutamate 313, phenylalanine 335, and tyrosine 342 together coordinate serotonin. At 313–329 (EPALPIWMMETMCSRKW) the chain is on the lumenal, vesicle side. The helical transmembrane segment at 330 to 353 (QLGVAFLPASISYLIGTNIFGILA) threads the bilayer. The Cytoplasmic segment spans residues 354–358 (HKMGR). Residues 359-379 (WLCALLGMVIVGISILCIPFA) traverse the membrane as a helical segment. The Lumenal, vesicle segment spans residues 380–390 (KNIYGLIAPNF). The chain crosses the membrane as a helical span at residues 391-411 (GVGFAIGMVDSSMMPIMGYLV). Residue aspartate 400 participates in serotonin binding. Topologically, residues 412-415 (DLRH) are cytoplasmic. A helical transmembrane segment spans residues 416–436 (VSVYGSVYAIADVAFCMGYAI). Tyrosine 434 contributes to the serotonin binding site. Topologically, residues 437–441 (GPSAG) are lumenal, vesicle. Residues 442 to 463 (GAIAKAIGFPWLMTIIGIIDIA) traverse the membrane as a helical segment. Residues 464–515 (FAPLCFFLRSPPAKEEKMAILMDHNCPIKRKMYTQNNVQSYPIGDDEESESD) are Cytoplasmic-facing. Phosphoserine; by CK2 occurs at positions 512 and 514.

The protein belongs to the major facilitator superfamily. Vesicular transporter family. Interacts with SLC6A3. In terms of tissue distribution, expressed in the substantia nigra and the tuberomammillary nucleus of the posterior hypothalamus. Expressed in stomach, in particular in varicose nerve fibers and enterochromaffin-like cells in the corpus region (at protein level).

The protein localises to the cytoplasmic vesicle. It localises to the secretory vesicle. It is found in the synaptic vesicle membrane. Its subcellular location is the secretory vesicle membrane. The protein resides in the cell projection. The protein localises to the axon. It localises to the dendrite. The enzyme catalyses serotonin(in) + 2 H(+)(out) = serotonin(out) + 2 H(+)(in). It catalyses the reaction dopamine(in) + 2 H(+)(out) = dopamine(out) + 2 H(+)(in). It carries out the reaction histamine(in) + 2 H(+)(out) = histamine(out) + 2 H(+)(in). With respect to regulation, strongly inhibited by reserpine and tetrabenazine. Also inhibited to a lesser extent by ketanserin and fenfluramine. Reserpine and ketanserin inhibit by blocking the substrate-binding pocket. Tetrabenazine traps SLC18A2/VMAT2 in an occluded conformation and its inhibition is specific to SLC18A2/VMAT2 but not SLC18A1/VMAT1. Functionally, electrogenic antiporter that exchanges one cationic monoamine with two intravesicular protons across the membrane of secretory and synaptic vesicles. Uses the electrochemical proton gradient established by the V-type proton-pump ATPase to accumulate high concentrations of monoamines inside the vesicles prior to their release via exocytosis. Transports a variety of catecholamines such as dopamine, adrenaline and noradrenaline, histamine, and indolamines such as serotonin. Regulates the transvesicular monoaminergic gradient that determines the quantal size. Mediates somatodendritic dopamine release in hippocampal neurons, likely as part of a regulated secretory pathway that integrates retrograde synaptic signals. Acts as a primary transporter for striatal dopamine loading ensuring impulse-dependent release of dopamine at the synaptic cleft. Responsible for histamine and serotonin storage and subsequent corelease from mast cell granules. The polypeptide is Synaptic vesicular amine transporter (Slc18a2) (Rattus norvegicus (Rat)).